Consider the following 394-residue polypeptide: NAD(P)H-quinone oxidoreductase subunit H (394 aa).

Belongs to the complex I 49 kDa subunit family. NDH-1 can be composed of about 15 different subunits; different subcomplexes with different compositions have been identified which probably have different functions.

The protein localises to the cellular thylakoid membrane. It catalyses the reaction a plastoquinone + NADH + (n+1) H(+)(in) = a plastoquinol + NAD(+) + n H(+)(out). The catalysed reaction is a plastoquinone + NADPH + (n+1) H(+)(in) = a plastoquinol + NADP(+) + n H(+)(out). NDH-1 shuttles electrons from an unknown electron donor, via FMN and iron-sulfur (Fe-S) centers, to quinones in the respiratory and/or the photosynthetic chain. The immediate electron acceptor for the enzyme in this species is believed to be plastoquinone. Couples the redox reaction to proton translocation, and thus conserves the redox energy in a proton gradient. Cyanobacterial NDH-1 also plays a role in inorganic carbon-concentration. In Thermosynechococcus vestitus (strain NIES-2133 / IAM M-273 / BP-1), this protein is NAD(P)H-quinone oxidoreductase subunit H.